We begin with the raw amino-acid sequence, 362 residues long: DNA replication and repair protein RecF (362 aa).

Residue 30–37 coordinates ATP; sequence GLNAQGKS.

It belongs to the RecF family.

Its subcellular location is the cytoplasm. In terms of biological role, the RecF protein is involved in DNA metabolism; it is required for DNA replication and normal SOS inducibility. RecF binds preferentially to single-stranded, linear DNA. It also seems to bind ATP. The chain is DNA replication and repair protein RecF from Thermoanaerobacter sp. (strain X514).